The sequence spans 108 residues: Nucleoid-associated protein BamMC406_1737 (108 aa).

The span at 85-95 (ATSQEKMSGMT) shows a compositional bias: polar residues. The segment at 85 to 108 (ATSQEKMSGMTSGLPLPPGFKLPF) is disordered. Residues 99–108 (PLPPGFKLPF) show a composition bias toward pro residues.

The protein belongs to the YbaB/EbfC family. In terms of assembly, homodimer.

Its subcellular location is the cytoplasm. The protein resides in the nucleoid. Binds to DNA and alters its conformation. May be involved in regulation of gene expression, nucleoid organization and DNA protection. The sequence is that of Nucleoid-associated protein BamMC406_1737 from Burkholderia ambifaria (strain MC40-6).